The following is a 501-amino-acid chain: Lysine--tRNA ligase (501 aa).

Mg(2+) is bound by residues Glu411 and Glu418.

Belongs to the class-II aminoacyl-tRNA synthetase family. Homodimer. The cofactor is Mg(2+).

The protein resides in the cytoplasm. It carries out the reaction tRNA(Lys) + L-lysine + ATP = L-lysyl-tRNA(Lys) + AMP + diphosphate. This is Lysine--tRNA ligase from Shewanella woodyi (strain ATCC 51908 / MS32).